Consider the following 480-residue polypeptide: UDP-N-acetylmuramoylalanine--D-glutamate ligase (480 aa).

Gly127 to Thr133 lines the ATP pocket.

This sequence belongs to the MurCDEF family.

It localises to the cytoplasm. It catalyses the reaction UDP-N-acetyl-alpha-D-muramoyl-L-alanine + D-glutamate + ATP = UDP-N-acetyl-alpha-D-muramoyl-L-alanyl-D-glutamate + ADP + phosphate + H(+). Its pathway is cell wall biogenesis; peptidoglycan biosynthesis. In terms of biological role, cell wall formation. Catalyzes the addition of glutamate to the nucleotide precursor UDP-N-acetylmuramoyl-L-alanine (UMA). This chain is UDP-N-acetylmuramoylalanine--D-glutamate ligase, found in Tropheryma whipplei (strain TW08/27) (Whipple's bacillus).